Here is a 423-residue protein sequence, read N- to C-terminus: Mannose-6-phosphate isomerase (423 aa).

At A2 the chain carries N-acetylalanine. Phosphoserine occurs at positions 102 and 108. Zn(2+) contacts are provided by Q110, H112, E137, and H276. Residue R295 is part of the active site.

The protein belongs to the mannose-6-phosphate isomerase type 1 family. It depends on Zn(2+) as a cofactor. In terms of tissue distribution, expressed in all tissues, but more abundant in testis.

It is found in the cytoplasm. The enzyme catalyses D-mannose 6-phosphate = D-fructose 6-phosphate. It functions in the pathway nucleotide-sugar biosynthesis; GDP-alpha-D-mannose biosynthesis; alpha-D-mannose 1-phosphate from D-fructose 6-phosphate: step 1/2. In terms of biological role, isomerase that catalyzes the interconversion of fructose-6-P and mannose-6-P and has a critical role in the supply of D-mannose derivatives required for many eukaryotic glycosylation reactions. This Mus musculus (Mouse) protein is Mannose-6-phosphate isomerase.